A 59-amino-acid polypeptide reads, in one-letter code: Large ribosomal subunit protein bL32 (59 aa).

The interval 1–59 is disordered; sequence MAVQQNKKSPSKRGMHRSHDALTAPALFVDSTTGEVHRPHHISPNGMYRGRKVVKAKGE. The span at 49–59 shows a compositional bias: basic residues; sequence RGRKVVKAKGE.

It belongs to the bacterial ribosomal protein bL32 family.

The chain is Large ribosomal subunit protein bL32 from Neisseria gonorrhoeae (strain ATCC 700825 / FA 1090).